The primary structure comprises 370 residues: 3-isopropylmalate dehydrogenase (370 aa).

77–90 (GPKWDGVPYDARPE) lines the NAD(+) pocket. Substrate contacts are provided by Arg-97, Arg-107, Arg-135, and Asp-226. Mg(2+)-binding residues include Asp-226, Asp-250, and Asp-254. 290–302 (GSAPDIAGKGMAN) serves as a coordination point for NAD(+).

Belongs to the isocitrate and isopropylmalate dehydrogenases family. LeuB type 1 subfamily. Homodimer. The cofactor is Mg(2+). Mn(2+) serves as cofactor.

The protein localises to the cytoplasm. It carries out the reaction (2R,3S)-3-isopropylmalate + NAD(+) = 4-methyl-2-oxopentanoate + CO2 + NADH. It participates in amino-acid biosynthesis; L-leucine biosynthesis; L-leucine from 3-methyl-2-oxobutanoate: step 3/4. Catalyzes the oxidation of 3-carboxy-2-hydroxy-4-methylpentanoate (3-isopropylmalate) to 3-carboxy-4-methyl-2-oxopentanoate. The product decarboxylates to 4-methyl-2 oxopentanoate. The sequence is that of 3-isopropylmalate dehydrogenase from Rhodopseudomonas palustris (strain ATCC BAA-98 / CGA009).